Reading from the N-terminus, the 209-residue chain is MAKLYFYYSAMNAGKTTTLLQSAHNYRERGMRTLILTPKLDHRAGSGVVASRIGLRADGRIFERDTGLQQLVERDIHNDGALHCVLVDEAQFLSRAQVWQLSEVVDRLRVPVLCYGLRTDFRGELFEGSQFLLAWADELEEIKTICHSGSKATMTVRVDAQGHAVQDGPQVEIGGNERYVSVSRAEFKKIMRGEGRIDPLQIALPLPVA.

ATP contacts are provided by residues 9–16 and 88–91; these read SAMNAGKT and DEAQ. E89 serves as the catalytic Proton acceptor.

It belongs to the thymidine kinase family. Homotetramer.

It localises to the cytoplasm. It carries out the reaction thymidine + ATP = dTMP + ADP + H(+). This chain is Thymidine kinase, found in Xanthomonas oryzae pv. oryzae (strain MAFF 311018).